A 367-amino-acid chain; its full sequence is Lysophosphatidic acid receptor 5 (367 aa).

Residues 1 to 25 lie on the Extracellular side of the membrane; that stretch reads MQANSSAKSLPTECPDYQPIHHLHL. An N-linked (GlcNAc...) asparagine glycan is attached at Asn4. The chain crosses the membrane as a helical span at residues 26–46; sequence VVYSVVLAAGLPLNALALWVF. The Cytoplasmic portion of the chain corresponds to 47-54; it reads LRALRVHS. Residues 55 to 75 traverse the membrane as a helical segment; it reads VVSVYMCNLAASDLLFTLSLP. Over 76–95 the chain is Extracellular; that stretch reads LRLSYYARHYWPFPDFLCQL. An intrachain disulfide couples Cys93 to Cys174. The helical transmembrane segment at 96–116 threads the bilayer; that stretch reads AGAVFQMNMYGSCIFLTLINV. Residues 117–135 lie on the Cytoplasmic side of the membrane; sequence DRYAAIVHPLRLRHLRRPR. The helical transmembrane segment at 136 to 156 threads the bilayer; sequence VARLLCLGVWALILVFAVPTI. The Extracellular portion of the chain corresponds to 157 to 186; that stretch reads LAHQPSSCARDGRNVSLCFESFSDKLWKGS. Asn170 carries N-linked (GlcNAc...) asparagine glycosylation. Residues 187–207 traverse the membrane as a helical segment; the sequence is LLPLLLLAEALGFLLPLAAVV. Over 208-238 the chain is Cytoplasmic; it reads YSSGRVFWTLARPDATRSQRRRKTVRLLLAS. A helical transmembrane segment spans residues 239 to 259; sequence LVIFLLCFVPYNATLAVYGLL. Topologically, residues 260–275 are extracellular; it reads RGEVVPASSEARKKVR. Residues 276–296 traverse the membrane as a helical segment; it reads GVLMVMVLLAGANCVLDPLVY. Residues 297 to 367 are Cytoplasmic-facing; that stretch reads YFSAEGFRNT…FTPSHEDSSF (71 aa). Over residues 332–350 the composition is skewed to low complexity; the sequence is LTETAHASTLTTTSQGQLQ. Residues 332–367 form a disordered region; that stretch reads LTETAHASTLTTTSQGQLQPSDPRSSFTPSHEDSSF. Residues 351–360 are compositionally biased toward polar residues; it reads PSDPRSSFTP.

This sequence belongs to the G-protein coupled receptor 1 family.

It localises to the cell membrane. In terms of biological role, receptor for lysophosphatidic acid (LPA), a mediator of diverse cellular activities. In Bos taurus (Bovine), this protein is Lysophosphatidic acid receptor 5 (LPAR5).